A 432-amino-acid chain; its full sequence is Gamma-glutamyl phosphate reductase (432 aa).

It belongs to the gamma-glutamyl phosphate reductase family.

The protein localises to the cytoplasm. It catalyses the reaction L-glutamate 5-semialdehyde + phosphate + NADP(+) = L-glutamyl 5-phosphate + NADPH + H(+). It participates in amino-acid biosynthesis; L-proline biosynthesis; L-glutamate 5-semialdehyde from L-glutamate: step 2/2. Functionally, catalyzes the NADPH-dependent reduction of L-glutamate 5-phosphate into L-glutamate 5-semialdehyde and phosphate. The product spontaneously undergoes cyclization to form 1-pyrroline-5-carboxylate. This is Gamma-glutamyl phosphate reductase from Ruminiclostridium cellulolyticum (strain ATCC 35319 / DSM 5812 / JCM 6584 / H10) (Clostridium cellulolyticum).